The sequence spans 243 residues: Sugar fermentation stimulation protein homolog (243 aa).

It belongs to the SfsA family.

In Bdellovibrio bacteriovorus (strain ATCC 15356 / DSM 50701 / NCIMB 9529 / HD100), this protein is Sugar fermentation stimulation protein homolog.